We begin with the raw amino-acid sequence, 217 residues long: Large ribosomal subunit protein bL21m (217 aa).

A compositionally biased stretch (low complexity) spans 61 to 81 (PPKVTTATTPEAPAAVPTSTP). The disordered stretch occupies residues 61–87 (PPKVTTATTPEAPAAVPTSTPFSQQPP).

Belongs to the bacterial ribosomal protein bL21 family. Component of the mitochondrial large ribosomal subunit (mt-LSU). Mature N.crassa 74S mitochondrial ribosomes consist of a small (37S) and a large (54S) subunit. The 37S small subunit contains a 16S ribosomal RNA (16S mt-rRNA) and 32 different proteins. The 54S large subunit contains a 23S rRNA (23S mt-rRNA) and 42 different proteins.

It localises to the mitochondrion. In terms of biological role, component of the mitochondrial ribosome (mitoribosome), a dedicated translation machinery responsible for the synthesis of mitochondrial genome-encoded proteins, including at least some of the essential transmembrane subunits of the mitochondrial respiratory chain. The mitoribosomes are attached to the mitochondrial inner membrane and translation products are cotranslationally integrated into the membrane. The sequence is that of Large ribosomal subunit protein bL21m (mrpl49) from Neurospora crassa (strain ATCC 24698 / 74-OR23-1A / CBS 708.71 / DSM 1257 / FGSC 987).